The chain runs to 253 residues: Imidazole glycerol phosphate synthase subunit HisF (253 aa).

Catalysis depends on residues Asp11 and Asp130.

Belongs to the HisA/HisF family. Heterodimer of HisH and HisF.

The protein localises to the cytoplasm. The enzyme catalyses 5-[(5-phospho-1-deoxy-D-ribulos-1-ylimino)methylamino]-1-(5-phospho-beta-D-ribosyl)imidazole-4-carboxamide + L-glutamine = D-erythro-1-(imidazol-4-yl)glycerol 3-phosphate + 5-amino-1-(5-phospho-beta-D-ribosyl)imidazole-4-carboxamide + L-glutamate + H(+). Its pathway is amino-acid biosynthesis; L-histidine biosynthesis; L-histidine from 5-phospho-alpha-D-ribose 1-diphosphate: step 5/9. Functionally, IGPS catalyzes the conversion of PRFAR and glutamine to IGP, AICAR and glutamate. The HisF subunit catalyzes the cyclization activity that produces IGP and AICAR from PRFAR using the ammonia provided by the HisH subunit. The sequence is that of Imidazole glycerol phosphate synthase subunit HisF from Dehalococcoides mccartyi (strain CBDB1).